The primary structure comprises 65 residues: Antimicrobial peptide THP1 (65 aa).

The N-terminal stretch at Met1–Leu25 is a signal peptide. 3 cysteine pairs are disulfide-bonded: Cys31/Cys53, Cys38/Cys59, and Cys43/Cys60. A propeptide spanning residues Lys61–Gly65 is cleaved from the precursor.

This sequence belongs to the beta-defensin family.

The protein resides in the secreted. Functionally, bactericidal activity; inhibits S.aureus and E.coli. The protein is Antimicrobial peptide THP1 of Meleagris gallopavo (Wild turkey).